Reading from the N-terminus, the 84-residue chain is Beta-cardiotoxin CTX23 (84 aa).

Positions 1–21 are cleaved as a signal peptide; the sequence is MKTLLLTLVVVTIVCLDLGYT. Intrachain disulfides connect Cys-24-Cys-43, Cys-36-Cys-61, Cys-65-Cys-76, and Cys-77-Cys-82.

This sequence belongs to the three-finger toxin family. Short-chain subfamily. Aminergic toxin sub-subfamily. Expressed by the venom gland.

Its subcellular location is the secreted. Acts as a beta-blocker by binding to beta-1 and beta-2 adrenergic receptors (ADRB1 and ADRB2). It dose-dependently decreases the heart rate (bradycardia), whereas conventional cardiotoxins increases it. At 100 mg/kg, intraperitoneal injection into mice provokes labored breathing, impaired locomotion, lack of response to external stimuli, and death (after 30 minutes). In Ophiophagus hannah (King cobra), this protein is Beta-cardiotoxin CTX23.